The following is a 478-amino-acid chain: Protein trichome birefringence-like 20 (478 aa).

A helical; Signal-anchor for type II membrane protein transmembrane segment spans residues 10–30 (IGLVIFPLILLTIAPILYLFF). Over residues 50 to 68 (SSAISSPSRYNHSSSSSDS) the composition is skewed to low complexity. The disordered stretch occupies residues 50-125 (SSAISSPSRY…KEHRRKKRKR (76 aa)). Over residues 92-110 (SSSLHNNDRLSISSSNGHH) the composition is skewed to polar residues. A compositionally biased stretch (basic residues) spans 112–125 (VTPKKEHRRKKRKR). Residues 200-202 (GDS) carry the GDS motif motif. The DCXHWCLPGXXDXWN motif signature appears at 447–461 (DCVHWCLPGPIDSWN).

The protein belongs to the PC-esterase family. TBL subfamily.

Its subcellular location is the membrane. Functionally, may act as a bridging protein that binds pectin and other cell wall polysaccharides. Probably involved in maintaining esterification of pectins. May be involved in the specific O-acetylation of cell wall polymers. In Arabidopsis thaliana (Mouse-ear cress), this protein is Protein trichome birefringence-like 20 (TBL20).